Here is a 771-residue protein sequence, read N- to C-terminus: DNA polymerase 1 (771 aa).

The protein belongs to the DNA polymerase type-B family.

It carries out the reaction DNA(n) + a 2'-deoxyribonucleoside 5'-triphosphate = DNA(n+1) + diphosphate. This is DNA polymerase 1 (polI) from Pyrococcus abyssi (strain GE5 / Orsay).